The chain runs to 118 residues: Thioredoxin H-type 2 (118 aa).

Residues 2-113 (AEEGQVIGVH…LQQTIAKHIS (112 aa)) enclose the Thioredoxin domain. Active-site nucleophile residues include C39 and C42. C39 and C42 are disulfide-bonded.

This sequence belongs to the thioredoxin family. Plant H-type subfamily.

The protein localises to the cytoplasm. Its function is as follows. Participates in various redox reactions through the reversible oxidation of the active center dithiol to a disulfide. The H form is known to activate a number of cytosolic enzymes. This is Thioredoxin H-type 2 from Nicotiana tabacum (Common tobacco).